The following is a 434-amino-acid chain: Alpha-enolase (434 aa).

S40 lines the Mg(2+) pocket. Positions 158 and 167 each coordinate substrate. E210 serves as the catalytic Proton donor. Residues D245, E293, and D318 each coordinate Mg(2+). Substrate contacts are provided by E293 and D318. K343 (proton acceptor) is an active-site residue. Residues 370 to 373 and K394 each bind substrate; that span reads SHRS.

This sequence belongs to the enolase family. In terms of assembly, homodimer. The cofactor is Mg(2+).

The protein localises to the cytoplasm. The enzyme catalyses (2R)-2-phosphoglycerate = phosphoenolpyruvate + H2O. The protein operates within carbohydrate degradation; glycolysis; pyruvate from D-glyceraldehyde 3-phosphate: step 4/5. Functionally, both an enzyme and a lens structural protein. In Anas platyrhynchos (Mallard), this protein is Alpha-enolase (ENO1).